Here is a 232-residue protein sequence, read N- to C-terminus: Putative quercetin 2,3-dioxygenase PA1210 (232 aa).

His57, His59, His101, and Glu103 together coordinate a divalent metal cation.

It belongs to the pirin family. A divalent metal cation is required as a cofactor.

The enzyme catalyses quercetin + O2 = 2-(3,4-dihydroxybenzoyloxy)-4,6-dihydroxybenzoate + CO. It functions in the pathway flavonoid metabolism; quercetin degradation. In terms of biological role, putative quercetin 2,3-dioxygenase. The sequence is that of Putative quercetin 2,3-dioxygenase PA1210 from Pseudomonas aeruginosa (strain ATCC 15692 / DSM 22644 / CIP 104116 / JCM 14847 / LMG 12228 / 1C / PRS 101 / PAO1).